The sequence spans 480 residues: Uridine 5'-monophosphate synthase (480 aa).

Ala2 is modified (N-acetylalanine). Residues 2–214 are OPRTase; that stretch reads AVARAALGPL…VFVAANHNGS (213 aa). The residue at position 37 (Tyr37) is a Phosphotyrosine. Phosphoserine is present on Ser214. A domain linker region spans residues 215-220; sequence PLSIKE. The interval 221-480 is OMPdecase; sequence APKELSFGAR…WEAYLSRLGV (260 aa). Ser257 contributes to the orotidine 5'-phosphate binding site. Residues Ser257, Asp259, and 281–283 contribute to the UMP site; that span reads KTH. Lys281 contributes to the orotidine 5'-phosphate binding site. Residues Asp312, Lys314, and Asp317 each act as for OMPdecase activity in the active site. Orotidine 5'-phosphate is bound by residues Lys314, Asp317, Thr321, Ser372, 430-432, and 450-451; these read QQY and GR. UMP contacts are provided by residues Asp317, Thr321, Ser372, 430–432, and 450–451; these read QQY and GR.

This sequence in the N-terminal section; belongs to the purine/pyrimidine phosphoribosyltransferase family. The protein in the C-terminal section; belongs to the OMP decarboxylase family. Homodimer; dimerization is required for enzymatic activity.

It carries out the reaction orotidine 5'-phosphate + diphosphate = orotate + 5-phospho-alpha-D-ribose 1-diphosphate. It catalyses the reaction orotidine 5'-phosphate + H(+) = UMP + CO2. It participates in pyrimidine metabolism; UMP biosynthesis via de novo pathway; UMP from orotate: step 1/2. Its pathway is pyrimidine metabolism; UMP biosynthesis via de novo pathway; UMP from orotate: step 2/2. Bifunctional enzyme catalyzing the last two steps of de novo pyrimidine biosynthesis, orotate phosphoribosyltransferase (OPRT), which converts orotate to orotidine-5'-monophosphate (OMP), and orotidine-5'-monophosphate decarboxylase (ODC), the terminal enzymatic reaction that decarboxylates OMP to uridine monophosphate (UMP). This Homo sapiens (Human) protein is Uridine 5'-monophosphate synthase.